Consider the following 301-residue polypeptide: MGGSKMSNDYEIDVEAGMSSLSIVNTPIEAPIVSSYNDRIRPLLDTVDRLRNLNVMREGIQLPTIVVVGDQSSGKSSVLESLAGINLPRGQGICTRVPLVMRLQRSSSPEPEIWLEYSDKVVPTDEEHVAEAICAATDVIAGTGEGVSDTPLTLSVKKNNVPDLTMVDLPGITRVPVNGQPENIYEQISRMIMKYIEPQESIILNVLSATVDFTTCESIRMSRQVDKTGERTLAVVTKADMAPEGLLQKVTADDVSIGLGYICVRNRIGEETYEEARVQEDLLFRTHPLLSLIDGDIVGIL.

Residues 59–301 enclose the Dynamin-type G domain; the sequence is GIQLPTIVVV…LIDGDIVGIL (243 aa). The G1 motif stretch occupies residues 69–76; the sequence is GDQSSGKS. 69–76 lines the GTP pocket; that stretch reads GDQSSGKS. Residues 94–96 form a G2 motif region; that stretch reads CTR. The G3 motif stretch occupies residues 168-171; it reads DLPG. GTP is bound by residues 168–172 and 237–240; these read DLPGI and TKAD. The interval 237 to 240 is G4 motif; the sequence is TKAD. A region of interest (G5 motif) is located at residue glutamate 270.

It belongs to the TRAFAC class dynamin-like GTPase superfamily. Dynamin/Fzo/YdjA family.

In Arabidopsis thaliana (Mouse-ear cress), this protein is Putative dynamin-related protein 4A (DRP4A).